The following is a 668-amino-acid chain: Fructose-1,6-bisphosphatase class 3 (668 aa).

The protein belongs to the FBPase class 3 family. Requires Mn(2+) as cofactor.

It catalyses the reaction beta-D-fructose 1,6-bisphosphate + H2O = beta-D-fructose 6-phosphate + phosphate. It functions in the pathway carbohydrate biosynthesis; gluconeogenesis. The chain is Fructose-1,6-bisphosphatase class 3 from Clostridium botulinum (strain ATCC 19397 / Type A).